A 428-amino-acid chain; its full sequence is Serine--tRNA ligase (428 aa).

235 to 237 (TAE) provides a ligand contact to L-serine. Residue 266–268 (RSE) coordinates ATP. E289 serves as a coordination point for L-serine. Residue 353 to 356 (EISS) participates in ATP binding. L-serine is bound at residue S389.

This sequence belongs to the class-II aminoacyl-tRNA synthetase family. Type-1 seryl-tRNA synthetase subfamily. In terms of assembly, homodimer. The tRNA molecule binds across the dimer.

It is found in the cytoplasm. The enzyme catalyses tRNA(Ser) + L-serine + ATP = L-seryl-tRNA(Ser) + AMP + diphosphate + H(+). It carries out the reaction tRNA(Sec) + L-serine + ATP = L-seryl-tRNA(Sec) + AMP + diphosphate + H(+). It functions in the pathway aminoacyl-tRNA biosynthesis; selenocysteinyl-tRNA(Sec) biosynthesis; L-seryl-tRNA(Sec) from L-serine and tRNA(Sec): step 1/1. Its function is as follows. Catalyzes the attachment of serine to tRNA(Ser). Is also able to aminoacylate tRNA(Sec) with serine, to form the misacylated tRNA L-seryl-tRNA(Sec), which will be further converted into selenocysteinyl-tRNA(Sec). The sequence is that of Serine--tRNA ligase from Shewanella sediminis (strain HAW-EB3).